The sequence spans 439 residues: MSKTMAMNLLEDWCRGMEVDIHRSLLVTGIPEDCGQAEIEETLNGVLSPLGPYRVLNKIFVREENVKAALIEVGEGVNLSTIPREFPGRGGVWRVVCRDPTQDAEFLKNLNEFLDAEGRTWEDVVRLLQLNHPTLSQNQHQPPENWAEALGVLLGAVVQIIFCMDAEIRSREEARAQEAAEFEEMAAWALAAGRKVKKEPGLAAEVGSALKAETPNNWNATEDQHEPTKPLVRRAGAKSRSRRKKQKKNSRQEAVPWKKPKGINSNSTANLEDPEVGDAESMAISEPIKGSRKPCVNKEELALKKPMAKCAWKGPREPPQDARAEAESPGGASESDQDGGHESPPKKKAVAWVSAKNPAPMRKKKKVSLGPVSYVLVDSEDGRKKPVMPKKGPGSRREASDQKAPRGQQPAEATASTSRGPKAKPEGSPRRATNESRKV.

Residues 208 to 439 are disordered; it reads SALKAETPNN…RRATNESRKV (232 aa). Residues 231–249 are compositionally biased toward basic residues; it reads LVRRAGAKSRSRRKKQKKN. 3 stretches are compositionally biased toward basic and acidic residues: residues 314–326, 395–404, and 423–439; these read GPREPPQDARAEA, SRREASDQKA, and AKPEGSPRRATNESRKV.

Belongs to the PNMA family.

This is Paraneoplastic antigen-like protein 8A from Homo sapiens (Human).